Reading from the N-terminus, the 303-residue chain is Growth/differentiation factor 15 (303 aa).

A signal peptide spans 1–30 (MALRALHAQPTGGPQLRFLLFLLLLLLLLS). A propeptide spanning residues 31 to 188 (WPSQGDALAL…LRSAAGRGRR (158 aa)) is cleaved from the precursor. Asn-71 carries N-linked (GlcNAc...) asparagine glycosylation. Cystine bridges form between Cys-198-Cys-205, Cys-206-Cys-269, Cys-235-Cys-300, and Cys-239-Cys-302.

This sequence belongs to the TGF-beta family. In terms of assembly, homodimer; disulfide-linked. Interacts with GFRAL and RET; ligand of GFRAL, which mediates GDF15 internalization and cellular signaling through interaction with RET via the formation of a 2:2:2 ternary complex composed of GDF15, GFRAL and RET. In terms of tissue distribution, detected in plasma (at protein level).

Its subcellular location is the secreted. Its function is as follows. Hormone produced in response to various stresses to confer information about those stresses to the brain, and trigger an aversive response, characterized by nausea and/or loss of appetite. The aversive response is both required to reduce continuing exposure to those stresses at the time of exposure and to promote avoidance behavior in the future. Acts by binding to its receptor, GFRAL, activating GFRAL-expressing neurons localized in the area postrema and nucleus tractus solitarius of the brainstem. It then triggers the activation of neurons localized within the parabrachial nucleus and central amygdala, which constitutes part of the 'emergency circuit' that shapes responses to stressful conditions. The GDF15-GFRAL signal induces expression of genes involved in metabolism, such as lipid metabolism in adipose tissues. Contributes to the effect of metformin, an anti-diabetic drug, on appetite reduction and weight loss: produced in the kidney in response to metformin treatment, thereby activating the GDF15-GFRAL response, leading to reduced appetite and weight. Required for avoidance behavior in response to food allergens: induced downstream of mast cell activation to promote aversion and minimize harmful effects of exposure to noxious substances. Produced in response to anticancer drugs, such as camptothecin or cisplatin, promoting nausea and contributing to malnutrition. Overproduced in many cancers, promoting anorexia in cancer (cachexia). Responsible for the risk of nausea during pregnancy: high levels of GDF15 during pregnancy, mostly originating from embryos, are associated with increased nausea. Maternal sensitivity to nausea is probably determined by pre-pregnancy exposure to GDF15, females with naturally high level of GDF15 being less susceptible to nausea than female rats with low levels of GDF15 before pregnancy. Promotes metabolic adaptation in response to systemic inflammation caused by bacterial and viral infections in order to promote tissue tolerance and prevent tissue damage. Required for tissue tolerance in response to myocardial infarction by acting as an inhibitor of leukocyte integring activation, thereby protecting against cardiac rupture. Inhibits growth hormone signaling on hepatocytes. This is Growth/differentiation factor 15 from Rattus norvegicus (Rat).